Here is a 55-residue protein sequence, read N- to C-terminus: Large ribosomal subunit protein bL33 (55 aa).

The protein belongs to the bacterial ribosomal protein bL33 family.

The sequence is that of Large ribosomal subunit protein bL33 from Aeromonas hydrophila subsp. hydrophila (strain ATCC 7966 / DSM 30187 / BCRC 13018 / CCUG 14551 / JCM 1027 / KCTC 2358 / NCIMB 9240 / NCTC 8049).